A 260-amino-acid chain; its full sequence is UPF0328 protein ECU07_1870/ECU10_0030 (260 aa).

It belongs to the UPF0328 family.

The sequence is that of UPF0328 protein ECU07_1870/ECU10_0030 from Encephalitozoon cuniculi (strain GB-M1) (Microsporidian parasite).